Reading from the N-terminus, the 248-residue chain is 3-deoxy-manno-octulosonate cytidylyltransferase (248 aa).

Belongs to the KdsB family.

It is found in the cytoplasm. It carries out the reaction 3-deoxy-alpha-D-manno-oct-2-ulosonate + CTP = CMP-3-deoxy-beta-D-manno-octulosonate + diphosphate. The protein operates within nucleotide-sugar biosynthesis; CMP-3-deoxy-D-manno-octulosonate biosynthesis; CMP-3-deoxy-D-manno-octulosonate from 3-deoxy-D-manno-octulosonate and CTP: step 1/1. It participates in bacterial outer membrane biogenesis; lipopolysaccharide biosynthesis. In terms of biological role, activates KDO (a required 8-carbon sugar) for incorporation into bacterial lipopolysaccharide in Gram-negative bacteria. This chain is 3-deoxy-manno-octulosonate cytidylyltransferase, found in Salmonella typhi.